The primary structure comprises 639 residues: ATP-dependent zinc metalloprotease FtsH (639 aa).

At 1 to 20 the chain is on the cytoplasmic side; that stretch reads MNGNNNMNNNGKSNNKKKNK. A helical transmembrane segment spans residues 21–41; sequence NWILGLVVVFLISAIFMSYFI. Topologically, residues 42-120 are periplasmic; it reads RGGESYKNVP…LSSGKSQASL (79 aa). The helical transmembrane segment at 121 to 141 threads the bilayer; sequence IGVLLQTLPWILFFIFFFFIF. The Cytoplasmic segment spans residues 142-639; that stretch reads RQTQGGGGKV…KEVKGEDVKG (498 aa). 212-219 contributes to the ATP binding site; sequence GSPGTGKT. Residue H434 participates in Zn(2+) binding. E435 is a catalytic residue. The Zn(2+) site is built by H438 and D510.

It in the central section; belongs to the AAA ATPase family. This sequence in the C-terminal section; belongs to the peptidase M41 family. Homohexamer. The cofactor is Zn(2+).

It is found in the cell inner membrane. Its function is as follows. Acts as a processive, ATP-dependent zinc metallopeptidase for both cytoplasmic and membrane proteins. Plays a role in the quality control of integral membrane proteins. The sequence is that of ATP-dependent zinc metalloprotease FtsH from Borreliella burgdorferi (strain ZS7) (Borrelia burgdorferi).